We begin with the raw amino-acid sequence, 288 residues long: Diaminopimelate epimerase (288 aa).

Substrate-binding residues include N14 and N67. The Proton donor role is filled by C76. Substrate is bound by residues 77–78 (GN), N166, N199, and 217–218 (ER). C226 serves as the catalytic Proton acceptor. 227–228 (GT) serves as a coordination point for substrate.

This sequence belongs to the diaminopimelate epimerase family. Homodimer.

The protein localises to the cytoplasm. The catalysed reaction is (2S,6S)-2,6-diaminopimelate = meso-2,6-diaminopimelate. Its pathway is amino-acid biosynthesis; L-lysine biosynthesis via DAP pathway; DL-2,6-diaminopimelate from LL-2,6-diaminopimelate: step 1/1. In terms of biological role, catalyzes the stereoinversion of LL-2,6-diaminopimelate (L,L-DAP) to meso-diaminopimelate (meso-DAP), a precursor of L-lysine and an essential component of the bacterial peptidoglycan. This Bacillus anthracis (strain A0248) protein is Diaminopimelate epimerase.